A 299-amino-acid chain; its full sequence is Pyridoxal 5'-phosphate synthase subunit PdxS (299 aa).

D24 lines the D-ribose 5-phosphate pocket. Residue K81 is the Schiff-base intermediate with D-ribose 5-phosphate of the active site. Residue G153 participates in D-ribose 5-phosphate binding. Position 165 (R165) interacts with D-glyceraldehyde 3-phosphate. Residues G219 and 240-241 (GS) contribute to the D-ribose 5-phosphate site.

The protein belongs to the PdxS/SNZ family. In the presence of PdxT, forms a dodecamer of heterodimers.

The enzyme catalyses aldehydo-D-ribose 5-phosphate + D-glyceraldehyde 3-phosphate + L-glutamine = pyridoxal 5'-phosphate + L-glutamate + phosphate + 3 H2O + H(+). It functions in the pathway cofactor biosynthesis; pyridoxal 5'-phosphate biosynthesis. Functionally, catalyzes the formation of pyridoxal 5'-phosphate from ribose 5-phosphate (RBP), glyceraldehyde 3-phosphate (G3P) and ammonia. The ammonia is provided by the PdxT subunit. Can also use ribulose 5-phosphate and dihydroxyacetone phosphate as substrates, resulting from enzyme-catalyzed isomerization of RBP and G3P, respectively. The chain is Pyridoxal 5'-phosphate synthase subunit PdxS from Methanococcus vannielii (strain ATCC 35089 / DSM 1224 / JCM 13029 / OCM 148 / SB).